The primary structure comprises 123 residues: Small ribosomal subunit protein uS12 (123 aa).

The disordered stretch occupies residues 1–24; the sequence is MPTINQLVRKGRTPQKVKSKVPAM. Positions 9 to 19 are enriched in basic residues; it reads RKGRTPQKVKS. Aspartate 89 is modified (3-methylthioaspartic acid).

It belongs to the universal ribosomal protein uS12 family. As to quaternary structure, part of the 30S ribosomal subunit. Contacts proteins S8 and S17. May interact with IF1 in the 30S initiation complex.

With S4 and S5 plays an important role in translational accuracy. Its function is as follows. Interacts with and stabilizes bases of the 16S rRNA that are involved in tRNA selection in the A site and with the mRNA backbone. Located at the interface of the 30S and 50S subunits, it traverses the body of the 30S subunit contacting proteins on the other side and probably holding the rRNA structure together. The combined cluster of proteins S8, S12 and S17 appears to hold together the shoulder and platform of the 30S subunit. This chain is Small ribosomal subunit protein uS12, found in Sphingopyxis alaskensis (strain DSM 13593 / LMG 18877 / RB2256) (Sphingomonas alaskensis).